The chain runs to 163 residues: Extracellular giant hemoglobin major globin subunit B2 (163 aa).

The first 16 residues, 1 to 16 (MIALFVLMGLMAAASA), serve as a signal peptide directing secretion. In terms of domain architecture, Globin spans 19–163 (CCSSEDRANV…RIANGISAGL (145 aa)). An intrachain disulfide couples C20 to C151. Residue C83 coordinates hydrogen sulfide. H114 serves as a coordination point for heme b.

Belongs to the globin family. In terms of assembly, the 400 kDa hemoglobin consists of a spherical 24-mer arranged as a double layer of dome-shaped dodecamers. Each dodecamer is composed of the 3-fold trimer of the tetramer A1-A2-B1-B2 having one intra-tetramer (A1-B2) disulfide bond and one inter-tetramer (B1-B2) disulfide bond per tetramer.

It is found in the secreted. The extracellular giant hemoglobin is able to bind and transport oxygen and hydrosulfide simultaneously and reversibly at two different sites. The chain is Extracellular giant hemoglobin major globin subunit B2 (ghbB2) from Oligobrachia mashikoi (Beard worm).